The sequence spans 277 residues: DNA-binding transcriptional activator MhpR (277 aa).

An HTH iclR-type domain is found at 12-74; the sequence is VRGLTRGLML…PSDDSFRLTI (63 aa). The H-T-H motif DNA-binding region spans 34 to 53; it reads VGLLAELSGLHRTTVRRLLE. The IclR-ED domain occupies 89–262; that stretch reads ISALAAPLLG…AKQIEEGVES (174 aa).

In terms of biological role, activator of the mhpABCDFE operon coding for components of the 3-hydroxyphenylpropionate degradation pathway. The protein is DNA-binding transcriptional activator MhpR (mhpR) of Escherichia coli (strain K12).